The chain runs to 66 residues: Large ribosomal subunit protein uL29c (66 aa).

Belongs to the universal ribosomal protein uL29 family.

Its subcellular location is the plastid. The protein localises to the chloroplast. The protein is Large ribosomal subunit protein uL29c of Gracilaria tenuistipitata var. liui (Red alga).